The chain runs to 1240 residues: Pectate lyase L (1240 aa).

Residues 1 to 26 (MRNCKGLSILLCFLLVFFAMPFPAVA) form the signal peptide. Has catalytic activity regions lie at residues 27–551 (EEAE…VTVR) and 545–1240 (TLKV…KSIK). Ca(2+) contacts are provided by Asp325, Glu349, Asp350, Asp1049, Asp1073, Asp1074, and Asp1077. Lys1117 functions as the Proton acceptor in the catalytic mechanism.

It belongs to the polysaccharide lyase 9 family. Ca(2+) is required as a cofactor.

The protein resides in the secreted. The enzyme catalyses Eliminative cleavage of (1-&gt;4)-alpha-D-galacturonan to give oligosaccharides with 4-deoxy-alpha-D-galact-4-enuronosyl groups at their non-reducing ends.. With respect to regulation, inhibited by the metal chelator ethylenediaminetetraacetic acid (EDTA). In terms of biological role, cleaves polygalacturonate or partially methylated pectin. When assayed on polygalacturonate or on pectin, it releases monogalacturonate as the principal product. This is Pectate lyase L from Thermoclostridium stercorarium (Clostridium stercorarium).